A 154-amino-acid chain; its full sequence is Lymphocyte antigen 6K (154 aa).

Residues 1 to 20 (MAFLVALLVVLGLQLVQSNA) form the signal peptide. The UPAR/Ly6 domain occupies 21–117 (LTCHVCEAQN…NGEGPPTDQL (97 aa)). Residue Gly-123 is the site of GPI-anchor amidated glycine attachment. Positions 124 to 154 (KASGRRHRYIELLLTGFMVLTANGLSALCLL) are cleaved as a propeptide — removed in mature form.

In terms of assembly, interacts with ADAM3 and TEX101. In terms of tissue distribution, strongly expressed in testes and weakly expressed in the epididymis, ovary, and uterus. Expressed in testicular germ cells (TGCs). Expressed in the testicular seminiferous tubules, in spermatocytes, spermatids, and testicular spermatozoa.

Its subcellular location is the secreted. The protein localises to the cytoplasm. It localises to the cell membrane. The protein resides in the cytoplasmic vesicle. It is found in the secretory vesicle. Its subcellular location is the acrosome. The protein localises to the membrane raft. Its function is as follows. Required for sperm migration into the oviduct and male fertility by controlling binding of sperm to zona pellucida. May play a role in cell growth. The sequence is that of Lymphocyte antigen 6K from Mus musculus (Mouse).